Consider the following 195-residue polypeptide: uncharacterized protein (195 aa).

The HTH tetR-type domain occupies glutamate 10–glutamine 70. Positions serine 33 to phenylalanine 52 form a DNA-binding region, H-T-H motif.

This is an uncharacterized protein from Mycobacterium tuberculosis (strain CDC 1551 / Oshkosh).